The primary structure comprises 63 residues: MLGHSIRRFTTSVVRRSHYEEGPGKNLPFSVENKWTLLVKMCLFFGSAFSVPFLIVRHQLLKQ.

A mitochondrion-targeting transit peptide spans 1 to 16; it reads MLGHSIRRFTTSVVRR. At 17–33 the chain is on the mitochondrial matrix side; that stretch reads SHYEEGPGKNLPFSVEN. Lys-25 carries the post-translational modification N6-acetyllysine; alternate. Position 25 is an N6-succinyllysine; alternate (Lys-25). A helical membrane pass occupies residues 34–60; the sequence is KWTLLVKMCLFFGSAFSVPFLIVRHQL. Residues 61–63 lie on the Mitochondrial intermembrane side of the membrane; that stretch reads LKQ.

Belongs to the cytochrome c oxidase VIIc family. Component of the cytochrome c oxidase (complex IV, CIV), a multisubunit enzyme composed of 14 subunits. The complex is composed of a catalytic core of 3 subunits MT-CO1, MT-CO2 and MT-CO3, encoded in the mitochondrial DNA, and 11 supernumerary subunits COX4I, COX5A, COX5B, COX6A, COX6B, COX6C, COX7A, COX7B, COX7C, COX8 and NDUFA4, which are encoded in the nuclear genome. The complex exists as a monomer or a dimer and forms supercomplexes (SCs) in the inner mitochondrial membrane with NADH-ubiquinone oxidoreductase (complex I, CI) and ubiquinol-cytochrome c oxidoreductase (cytochrome b-c1 complex, complex III, CIII), resulting in different assemblies (supercomplex SCI(1)III(2)IV(1) and megacomplex MCI(2)III(2)IV(2)). Interacts with RAB5IF.

It localises to the mitochondrion inner membrane. It functions in the pathway energy metabolism; oxidative phosphorylation. Its function is as follows. Component of the cytochrome c oxidase, the last enzyme in the mitochondrial electron transport chain which drives oxidative phosphorylation. The respiratory chain contains 3 multisubunit complexes succinate dehydrogenase (complex II, CII), ubiquinol-cytochrome c oxidoreductase (cytochrome b-c1 complex, complex III, CIII) and cytochrome c oxidase (complex IV, CIV), that cooperate to transfer electrons derived from NADH and succinate to molecular oxygen, creating an electrochemical gradient over the inner membrane that drives transmembrane transport and the ATP synthase. Cytochrome c oxidase is the component of the respiratory chain that catalyzes the reduction of oxygen to water. Electrons originating from reduced cytochrome c in the intermembrane space (IMS) are transferred via the dinuclear copper A center (CU(A)) of subunit 2 and heme A of subunit 1 to the active site in subunit 1, a binuclear center (BNC) formed by heme A3 and copper B (CU(B)). The BNC reduces molecular oxygen to 2 water molecules using 4 electrons from cytochrome c in the IMS and 4 protons from the mitochondrial matrix. The polypeptide is Cytochrome c oxidase subunit 7C, mitochondrial (COX7C) (Macaca fascicularis (Crab-eating macaque)).